The sequence spans 259 residues: Bidirectional sugar transporter SWEET6a (259 aa).

At 1–9 (MISPDAARN) the chain is on the extracellular side. Residues 10-30 (VVGIIGNVISFGLFLAPVPTF) traverse the membrane as a helical segment. Positions 10 to 98 (VVGIIGNVIS…IFFLYSPNKK (89 aa)) constitute a MtN3/slv 1 domain. At 31-45 (WRICKRKDVEEFKAD) the chain is on the cytoplasmic side. Residues 46–66 (PYLATLLNCMLWVFYGIPVVH) form a helical membrane-spanning segment. Over 67–69 (PNS) the chain is Extracellular. Residues 70-90 (ILVVTINGIGLLVEGTYLLIF) traverse the membrane as a helical segment. The Cytoplasmic portion of the chain corresponds to 91-103 (FLYSPNKKRLRMC). A helical transmembrane segment spans residues 104–124 (AVLGVELVFMLAVILGVLLGA). Residues 125–131 (HTHEKRS) lie on the Extracellular side of the membrane. The helical transmembrane segment at 132–152 (MIVGILCVFFGSIMYFSPLTI) threads the bilayer. The MtN3/slv 2 domain maps to 133–216 (IVGILCVFFG…LILYACYYRT (84 aa)). At 153-165 (MGKVIKTKSVEYM) the chain is on the cytoplasmic side. Residues 166 to 186 (PFFLSLVCFLNGVCWTAYALI) traverse the membrane as a helical segment. At 187 to 189 (RFD) the chain is on the extracellular side. Residues 190–210 (IYVTIPNGLGALFGAIQLILY) traverse the membrane as a helical segment. Topologically, residues 211–259 (ACYYRTTPKKTKAAKDVEMPSVVVSGTGAAAAAGGGNTGGGSISVTVER) are cytoplasmic.

The protein belongs to the SWEET sugar transporter family. In terms of assembly, forms homooligomers and/or heterooligomers.

It is found in the cell membrane. In terms of biological role, mediates both low-affinity uptake and efflux of sugar across the plasma membrane. The sequence is that of Bidirectional sugar transporter SWEET6a (SWEET6A) from Oryza sativa subsp. indica (Rice).